The sequence spans 95 residues: Small ribosomal subunit protein bS18 (95 aa).

This sequence belongs to the bacterial ribosomal protein bS18 family. As to quaternary structure, part of the 30S ribosomal subunit. Forms a tight heterodimer with protein bS6.

Functionally, binds as a heterodimer with protein bS6 to the central domain of the 16S rRNA, where it helps stabilize the platform of the 30S subunit. This is Small ribosomal subunit protein bS18 from Rickettsia massiliae (strain Mtu5).